The primary structure comprises 223 residues: Endonuclease V (223 aa).

Mg(2+) is bound by residues D35 and D103.

This sequence belongs to the endonuclease V family. It depends on Mg(2+) as a cofactor.

It is found in the cytoplasm. It carries out the reaction Endonucleolytic cleavage at apurinic or apyrimidinic sites to products with a 5'-phosphate.. In terms of biological role, DNA repair enzyme involved in the repair of deaminated bases. Selectively cleaves double-stranded DNA at the second phosphodiester bond 3' to a deoxyinosine leaving behind the intact lesion on the nicked DNA. The sequence is that of Endonuclease V from Klebsiella pneumoniae subsp. pneumoniae (strain ATCC 700721 / MGH 78578).